The following is a 345-amino-acid chain: Gibberellin 2-beta-dioxygenase 2 (345 aa).

The Fe2OG dioxygenase domain maps to 170–285 (HSDSLLRINH…RMSMMYFAAP (116 aa)). The Fe cation site is built by histidine 209, aspartate 211, and histidine 266. Arginine 276 is a catalytic residue.

It belongs to the iron/ascorbate-dependent oxidoreductase family. GA2OX subfamily. Requires Fe cation as cofactor. As to expression, predominantly expressed in leaves.

The enzyme catalyses gibberellin A1 + 2-oxoglutarate + O2 = gibberellin A8 + succinate + CO2. Its pathway is plant hormone biosynthesis; gibberellin biosynthesis. Functionally, catalyzes the 2-beta-hydroxylation of several biologically active gibberellins, leading to the homeostatic regulation of their endogenous level. Catabolism of gibberellins (GAs) plays a central role in plant development. Converts GA9/GA20 to GA51/GA29 and GA4/GA1 to GA34/GA8. The chain is Gibberellin 2-beta-dioxygenase 2 (GA2OX2) from Pisum sativum (Garden pea).